The primary structure comprises 561 residues: NO-associated protein 1, chloroplastic/mitochondrial (561 aa).

Residues 1–31 (MALRTLSTFPSLPRRHTTTRREPNLTVIYRN) constitute a chloroplast and mitochondrion transit peptide. GTP is bound by residues 108–111 (CYGC), 166–174 (YPGGKQFVS), 223–226 (TKID), 260–261 (SK), and 289–294 (NVGKSA). One can recognise a CP-type G domain in the interval 175–351 (ADELREKLSH…LYDTPGVHLH (177 aa)).

It belongs to the TRAFAC class YlqF/YawG GTPase family. NOA1 subfamily. Expressed in aleurone layer and the embryo.

The protein localises to the mitochondrion. It is found in the plastid. Its subcellular location is the chloroplast. The catalysed reaction is 2 L-arginine + 3 NADPH + 4 O2 + H(+) = 2 L-citrulline + 2 nitric oxide + 3 NADP(+) + 4 H2O. Its activity is regulated as follows. Stimulated by calcium/calmodulin. Inhibited by L-NAME. Not activated by tetrahydrobiopterin (BH4), FAD, FMN, or heme. Its function is as follows. Exhibits cGTPase activity; binds and hydrolyzes specifically GTP. May participate in ribosome assembly and stability and thus regulates protein synthesis in chloroplasts. The GTPase activity requires MgCl(2)and the presence of either KCl or (NH(4))(2)SO(4). Involved in the post-transcriptional regulation of the methylerythritol phosphate (MEP) pathway. Involved in chlorophyll-a fluorescence regulation. Functionally, may mediate the production or accumulation of nitric oxide (NO) which is a messenger molecule involved in hormonal signaling and defense responses in plant. Acts as an antisenescence agent. Plays a crucial role in both extracellular calmodulin (ExtCaM)-triggered and salicylic acid (SA)-mediated H(2)O(2)-dependent stomatal closure. This Arabidopsis thaliana (Mouse-ear cress) protein is NO-associated protein 1, chloroplastic/mitochondrial (NOA1).